Here is a 354-residue protein sequence, read N- to C-terminus: Falstatin (354 aa).

An N-terminal signal peptide occupies residues 1 to 21 (MKSITFFVFNICSILALLSHC). The BC loop; binds and inhibits the active site cavity of cysteine proteases motif lies at 226–236 (LEGNAGTGYLW). Residues 274–317 (KYKIDEHDSSKNVNREIESPEQKESDSKPKKPQMQLLGGPDRMR) are disordered. Positions 275–302 (YKIDEHDSSKNVNREIESPEQKESDSKP) are enriched in basic and acidic residues.

It belongs to the protease inhibitor I71 family. In terms of assembly, oligomer; probably composed of 10 monomers. Post-translationally, during the liver stage, proteolytically cleaved.

The protein resides in the secreted. Its subcellular location is the cytoplasmic vesicle. It is found in the secretory vesicle. It localises to the microneme. The protein localises to the host cytoplasm. The protein resides in the parasitophorous vacuole lumen. Cysteine protease inhibitor. Required for the invasion of host erythrocytes by merozoites. In the mosquito vector, essential for the gliding motility of hemocoel sporozoites and, therefore, for salivary gland invasion and the subsequent transmission from the mosquito to the mammalian host. Required for the invasion of host hepatocytes. During the liver stage, may prevent host hepatocyte cell death likely by inhibiting host cysteine proteases. The protein is Falstatin of Plasmodium berghei (strain Anka).